The following is a 475-amino-acid chain: UDP-N-acetylmuramoylalanine--D-glutamate ligase (475 aa).

130–136 lines the ATP pocket; the sequence is GTNGKTT.

It belongs to the MurCDEF family.

The protein localises to the cytoplasm. The catalysed reaction is UDP-N-acetyl-alpha-D-muramoyl-L-alanine + D-glutamate + ATP = UDP-N-acetyl-alpha-D-muramoyl-L-alanyl-D-glutamate + ADP + phosphate + H(+). It functions in the pathway cell wall biogenesis; peptidoglycan biosynthesis. Its function is as follows. Cell wall formation. Catalyzes the addition of glutamate to the nucleotide precursor UDP-N-acetylmuramoyl-L-alanine (UMA). The chain is UDP-N-acetylmuramoylalanine--D-glutamate ligase from Corynebacterium efficiens (strain DSM 44549 / YS-314 / AJ 12310 / JCM 11189 / NBRC 100395).